We begin with the raw amino-acid sequence, 621 residues long: Beta-conglycinin alpha' subunit (621 aa).

An N-terminal signal peptide occupies residues 1–24; it reads MMRARFPLLLLGVVFLASVSVSFG. The propeptide occupies 25–62; it reads IAYWEKQNPSHNKCLRSCNSEKDSYRNQACHARCNLLK. The interval 64–214 is disordered; the sequence is EEEEECEEGQ…RHKNKNPFHF (151 aa). Basic and acidic residues-rich tracts occupy residues 80 to 92 and 111 to 173; these read QHPE…HGEK and PHQE…QGKE. Over residues 174–196 the composition is skewed to acidic residues; that stretch reads SEEEEEDQDEDEEQDKESQESEG. Cupin type-1 domains follow at residues 212–370 and 422–583; these read FHFN…EEIN and FNLR…KDIE. 2 N-linked (GlcNAc...) asparagine glycosylation sites follow: asparagine 277 and asparagine 533. Residues 612–621 are necessary for sorting to protein storage vacuole; sequence PLSSILRAFY.

This sequence belongs to the 7S seed storage protein family. In terms of assembly, the alpha-, alpha'-, and beta-subunits associate in various combinations to form trimeric proteins.

It localises to the vacuole. Its subcellular location is the aleurone grain. The protein resides in the endoplasmic reticulum. It is found in the protein storage vacuole. Its function is as follows. Seed storage protein. Accumulates during seed development and is hydrolyzed after germination to provide a carbon and nitrogen source for the developing seedling. This Glycine max (Soybean) protein is Beta-conglycinin alpha' subunit.